A 612-amino-acid polypeptide reads, in one-letter code: FAD-linked oxidoreductase notD' (612 aa).

The N-terminal stretch at 1 to 19 is a signal peptide; it reads MRDIRELLLVLFTSCLALG. 3 N-linked (GlcNAc...) asparagine glycosylation sites follow: Asn50, Asn86, and Asn109. An FAD-binding PCMH-type domain is found at 124-307; that stretch reads GQGRIPRYSA…TSITMPVFGA (184 aa). 2 N-linked (GlcNAc...) asparagine glycosylation sites follow: Asn311 and Asn396.

It belongs to the oxygen-dependent FAD-linked oxidoreductase family. The cofactor is FAD.

Its pathway is alkaloid biosynthesis. Its function is as follows. FAD-linked oxidoreductase; part of the gene cluster that mediates the biosynthesis of notoamide, a fungal indole alkaloid that belongs to a family of natural products containing a characteristic bicyclo[2.2.2]diazaoctane core. The first step of notoamide biosynthesis involves coupling of L-proline and L-tryptophan by the bimodular NRPS notE', to produce cyclo-L-tryptophan-L-proline called brevianamide F. The reverse prenyltransferase notF' then acts as a deoxybrevianamide E synthase and converts brevianamide F to deoxybrevianamide E via reverse prenylation at C-2 of the indole ring leading to the bicyclo[2.2.2]diazaoctane core. Deoxybrevianamide E is further hydroxylated at C-6 of the indole ring, likely catalyzed by the cytochrome P450 monooxygenase notG', to yield 6-hydroxy-deoxybrevianamide E. 6-hydroxy-deoxybrevianamide E is a specific substrate of the prenyltransferase notC' for normal prenylation at C-7 to produce 6-hydroxy-7-prenyl-deoxybrevianamide, also called notoamide S. As the proposed pivotal branching point in notoamide biosynthesis, notoamide S can be diverted to notoamide E through an oxidative pyran ring closure putatively catalyzed by either notH' cytochrome P450 monooxygenase or the notD' FAD-linked oxidoreductase. This step would be followed by an indole 2,3-epoxidation-initiated pinacol-like rearrangement catalyzed by the notB' FAD-dependent monooxygenase leading to the formation of notoamide C and notoamide D. On the other hand notoamide S is converted to notoamide T by notH' (or notD'), a bifunctional oxidase that also functions as the intramolecular Diels-Alderase responsible for generation of (-)-notoamide T. To generate antipodal (+)-notoaminide T, notH (or notD) in Aspergillus strain MF297-2 is expected to catalyze a Diels-Alder reaction leading to the opposite stereochemistry. The remaining oxidoreductase notD' (or notH') likely catalyzes the oxidative pyran ring formation to yield (-)-stephacidin A. The FAD-dependent monooxygenase notI' is highly similar to notB' and is predicted to catalyze a similar conversion from (-)-stephacidin A to (+)-notoamide B via the 2,3-epoxidation of (-)-stephacidin A followed by a pinacol-type rearrangement. Finally, it remains unclear which enzyme could be responsible for the final hydroxylation steps leading to notoamide A and sclerotiamide. The protein is FAD-linked oxidoreductase notD' of Aspergillus versicolor.